We begin with the raw amino-acid sequence, 452 residues long: Molybdate-anion transporter (452 aa).

A run of 12 helical transmembrane segments spans residues 1–21 (MLLT…VLEF), 45–65 (YDFY…GPYL), 79–99 (IAII…VSAP), 130–150 (FVLI…FSSF), 180–200 (NGGI…WLGL), 201–221 (GPAS…ALVI), 251–271 (VLLL…FIFL), 281–301 (TPLG…SSLY), 316–336 (VLCL…FSTA), 346–366 (LLAF…MGFL), 377–397 (IGVL…GLLV), and 410–430 (MFSL…SLFT).

It belongs to the major facilitator superfamily.

It localises to the cell membrane. Mediates high-affinity intracellular uptake of the rare oligo-element molybdenum. The sequence is that of Molybdate-anion transporter (mfsd5) from Xenopus tropicalis (Western clawed frog).